The following is a 473-amino-acid chain: Cytochrome c-552 (473 aa).

Residues 1 to 33 (MQHGDEMMKKMTGKSFALSALVAASFMAAGAMA) form the signal peptide. Histidine 93 provides a ligand contact to heme c. Residues cysteine 121, cysteine 124, and lysine 125 each contribute to the heme site. Residues cysteine 159, cysteine 162, histidine 163, cysteine 201, cysteine 204, and histidine 205 each contribute to the heme c site. 4 residues coordinate Ca(2+): glutamate 207, tyrosine 208, lysine 256, and glutamine 258. Tyrosine 208 provides a ligand contact to substrate. Histidine 259 contributes to the substrate binding site. Heme c contacts are provided by histidine 270, cysteine 277, cysteine 280, histidine 281, histidine 296, cysteine 309, cysteine 312, histidine 313, and histidine 388.

It belongs to the cytochrome c-552 family. Requires Ca(2+) as cofactor. Heme c serves as cofactor.

The protein resides in the periplasm. It catalyses the reaction 6 Fe(III)-[cytochrome c] + NH4(+) + 2 H2O = 6 Fe(II)-[cytochrome c] + nitrite + 8 H(+). It functions in the pathway nitrogen metabolism; nitrate reduction (assimilation). Catalyzes the reduction of nitrite to ammonia, consuming six electrons in the process. This is Cytochrome c-552 from Shewanella sp. (strain ANA-3).